The primary structure comprises 570 residues: Proline--tRNA ligase (570 aa).

Belongs to the class-II aminoacyl-tRNA synthetase family. ProS type 1 subfamily. In terms of assembly, homodimer.

The protein resides in the cytoplasm. It carries out the reaction tRNA(Pro) + L-proline + ATP = L-prolyl-tRNA(Pro) + AMP + diphosphate. In terms of biological role, catalyzes the attachment of proline to tRNA(Pro) in a two-step reaction: proline is first activated by ATP to form Pro-AMP and then transferred to the acceptor end of tRNA(Pro). As ProRS can inadvertently accommodate and process non-cognate amino acids such as alanine and cysteine, to avoid such errors it has two additional distinct editing activities against alanine. One activity is designated as 'pretransfer' editing and involves the tRNA(Pro)-independent hydrolysis of activated Ala-AMP. The other activity is designated 'posttransfer' editing and involves deacylation of mischarged Ala-tRNA(Pro). The misacylated Cys-tRNA(Pro) is not edited by ProRS. The polypeptide is Proline--tRNA ligase (Pelotomaculum thermopropionicum (strain DSM 13744 / JCM 10971 / SI)).